Consider the following 311-residue polypeptide: MKVAVLGAAGGIGQALALLLKLQLPAGTDLALYDIAPVTPGVAVDVSHIPTAVNVKGFSGEDPTPALEGADVVLISAGVARKPGMDRSDLFNINAGIVRGLIEKVAITCPKACVGIITNPVNTTVAIAAEVLKKAGVYDKRKLFGVTTLDVLRSETFVAELKGLNVSRTSVPVIGGHSGVTILPLLSQVQYAKWNEEEIEPLTKRIQNAGTEVVNAKAGGGSATLSMAQAAARFARSLVKGLSGETVVECTYVEGDGKYARFFSQPVRLGKEGVEEILPIGPLSNFEQQALENMLPTLRADIELGEKFING.

NAD(+) is bound by residues 7–13 and aspartate 34; that span reads GAAGGIG. 2 residues coordinate substrate: arginine 81 and arginine 87. Residues asparagine 94 and 117–119 each bind NAD(+); that span reads ITN. Substrate-binding residues include asparagine 119 and arginine 153. Histidine 177 (proton acceptor) is an active-site residue. Methionine 227 contributes to the NAD(+) binding site.

Belongs to the LDH/MDH superfamily. MDH type 1 family. As to quaternary structure, homodimer.

The catalysed reaction is (S)-malate + NAD(+) = oxaloacetate + NADH + H(+). Catalyzes the reversible oxidation of malate to oxaloacetate. In Haemophilus influenzae (strain PittGG), this protein is Malate dehydrogenase.